The following is a 339-amino-acid chain: MQSINQSINQSINQSINQSINQSINQSINQSINQSINQSINQIVGFVKTCYKPEEVFHFLHQHSIPFSSIGGMTNQNVLLNISGVKFVLRIPNAVNLSLINREYEAFNNAQAYRAGLNVETPVLDAKSGVKLTRYLENSNTLSQIQLNEQSCLSQVVNNLYRLHNSEFVFRNVFSVFDEFRQYFSLLENKSAFYQADSRMDKLSAVFWQFEEINKDIILRPCHNDLVPENMLLQDDRLFFIDWEYSGLNDPLFDIATIIEEAHLSKEAADFLLETYCNQTNKYHKTEFQIAHKRLKIHRFCQNVLWFLWTKVKEEHGENFGDYALKRLDAAFKLLEELP.

A run of 9 repeats spans residues Ile4 to Ser7, Ile8 to Ser11, Ile12 to Ser15, Ile16 to Ser19, Ile20 to Ser23, Ile24 to Ser27, Ile28 to Ser31, Ile32 to Ser35, and Ile36 to Ser39. Residues Ile4–Ser39 are 9 X 4 AA tandem repeats of I-N-Q-S.

Belongs to the peptidase S49 family.

Its function is as follows. Mediates phase variation of the LOS 6A2 and 12D9 epitopes. Phase variation of H.influenza LOS epitopes expressed by LicA is determined by a translational switch. The polypeptide is Protein LicA (licA) (Haemophilus influenzae).